A 654-amino-acid chain; its full sequence is Macrolide export ATP-binding/permease protein MacB (654 aa).

In terms of domain architecture, ABC transporter spans 6-244 (IELRGLRREF…RAGDAPTRQP (239 aa)). 42 to 49 (GASGSGKS) contacts ATP. Helical transmembrane passes span 278-298 (FLTM…VAVG), 527-547 (LTLM…IGVM), 584-604 (VVCL…AALF), and 619-639 (SIAA…YLPA).

Belongs to the ABC transporter superfamily. Macrolide exporter (TC 3.A.1.122) family. As to quaternary structure, homodimer.

It localises to the cell inner membrane. Functionally, non-canonical ABC transporter that contains transmembrane domains (TMD), which form a pore in the inner membrane, and an ATP-binding domain (NBD), which is responsible for energy generation. Confers resistance against macrolides. The protein is Macrolide export ATP-binding/permease protein MacB of Rhodopseudomonas palustris (strain HaA2).